Consider the following 111-residue polypeptide: uncharacterized protein (111 aa).

It localises to the mitochondrion. This is an uncharacterized protein from Arabidopsis thaliana (Mouse-ear cress).